Consider the following 400-residue polypeptide: MGGWSSKPRQGMGTNLSVPNPLGFFPDHQLDPAFGANSNNPDWDFNPNKDRWPEANQVGAGAFGPGYPPPHGGLLGWSPQAQGILTTVPAAPPPASTNRQSGRQPTPISPPLRDSHPQAMQWNSTTFHQVLLDPRVRGLYFPPGGSSSGTVNPVPTTASPISSISSRTGDPAPNMESTTSGFLGPLLVLQAGFFLLTRILTIPQSLDSWWTSLNFLGGAPTCPGQNSQSPTSNHSPTSCPPICPGYRWMCLRRFIIFLFILLLCLIFLLVLLDYQGMLPVCPLLPGTSTTSTGPCKTCTIPAQGTSMFPSCCCTKPSDGNCTCIPIPSSWAFARFLWEGASVRFSWLSLLVPFVQWFVGLSPTVWLSVIWMMWYWGPSLYNILSPFLPLLPIFFCLWVYI.

N-acetylmethionine is present on methionine 1. Disordered regions lie at residues 1–64 (MGGW…GAFG), 85–118 (LTTVPAAPPPASTNRQSGRQPTPISPPLRDSHPQ), and 143–174 (PGGSSSGTVNPVPTTASPISSISSRTGDPAPN). A lipid anchor (N-myristoyl glycine; by host) is attached at glycine 2. The interval 2 to 119 (GGWSSKPRQG…PPLRDSHPQA (118 aa)) is pre-S1. The tract at residues 2 to 174 (GGWSSKPRQG…SSRTGDPAPN (173 aa)) is pre-S. Residues 2–181 (GGWSSKPRQG…APNMESTTSG (180 aa)) are Virion surface; in external conformation-facing. The Intravirion; in internal conformation portion of the chain corresponds to 2-253 (GGWSSKPRQG…PGYRWMCLRR (252 aa)). A glycan (N-linked (GlcNAc...) asparagine) is linked at tryptophan 4. The span at 96 to 106 (STNRQSGRQPT) shows a compositional bias: polar residues. The segment at 120–174 (MQWNSTTFHQVLLDPRVRGLYFPPGGSSSGTVNPVPTTASPISSISSRTGDPAPN) is pre-S2. A compositionally biased stretch (low complexity) spans 155–166 (PTTASPISSISS). Residues 182 to 202 (FLGPLLVLQAGFFLLTRILTI) traverse the membrane as a helical segment. At 203-253 (PQSLDSWWTSLNFLGGAPTCPGQNSQSPTSNHSPTSCPPICPGYRWMCLRR) the chain is on the intravirion; in external conformation side. The chain crosses the membrane as a helical span at residues 254–274 (FIIFLFILLLCLIFLLVLLDY). Residues 275 to 348 (QGMLPVCPLL…GASVRFSWLS (74 aa)) lie on the Virion surface side of the membrane. A glycan (N-linked (GlcNAc...) asparagine; by host) is linked at asparagine 320. Residues 349-369 (LLVPFVQWFVGLSPTVWLSVI) form a helical membrane-spanning segment. Topologically, residues 370–375 (WMMWYW) are intravirion. Residues 376 to 398 (GPSLYNILSPFLPLLPIFFCLWV) traverse the membrane as a helical segment. Residues 399–400 (YI) are Virion surface-facing.

This sequence belongs to the orthohepadnavirus major surface antigen family. In terms of assembly, in its internal form (Li-HBsAg), interacts with the capsid protein and with the isoform S. Interacts with host chaperone CANX. As to quaternary structure, associates with host chaperone CANX through its pre-S2 N glycan; this association may be essential for isoform M proper secretion. Interacts with isoform L. Interacts with the antigens of satellite virus HDV (HDVAgs); this interaction is required for encapsidation of HDV genomic RNA. In terms of processing, isoform M is N-terminally acetylated by host at a ratio of 90%, and N-glycosylated by host at the pre-S2 region. Myristoylated.

Its subcellular location is the virion membrane. In terms of biological role, the large envelope protein exists in two topological conformations, one which is termed 'external' or Le-HBsAg and the other 'internal' or Li-HBsAg. In its external conformation the protein attaches the virus to cell receptors and thereby initiating infection. This interaction determines the species specificity and liver tropism. This attachment induces virion internalization predominantly through caveolin-mediated endocytosis. The large envelope protein also assures fusion between virion membrane and endosomal membrane. In its internal conformation the protein plays a role in virion morphogenesis and mediates the contact with the nucleocapsid like a matrix protein. The middle envelope protein plays an important role in the budding of the virion. It is involved in the induction of budding in a nucleocapsid independent way. In this process the majority of envelope proteins bud to form subviral lipoprotein particles of 22 nm of diameter that do not contain a nucleocapsid. This is Large envelope protein from Homo sapiens (Human).